The sequence spans 288 residues: ATP synthase gamma chain (288 aa).

It belongs to the ATPase gamma chain family. F-type ATPases have 2 components, CF(1) - the catalytic core - and CF(0) - the membrane proton channel. CF(1) has five subunits: alpha(3), beta(3), gamma(1), delta(1), epsilon(1). CF(0) has three main subunits: a, b and c.

The protein localises to the cell membrane. Its function is as follows. Produces ATP from ADP in the presence of a proton gradient across the membrane. The gamma chain is believed to be important in regulating ATPase activity and the flow of protons through the CF(0) complex. This Bacillus pumilus (strain SAFR-032) protein is ATP synthase gamma chain.